The primary structure comprises 388 residues: Succinate--CoA ligase [ADP-forming] subunit beta (388 aa).

An ATP-grasp domain is found at 9–244; sequence KQLFSRYGLP…PSQEDPREAQ (236 aa). ATP-binding positions include Lys-46, 53–55, Glu-99, Thr-102, and Glu-107; that span reads GRG. The Mg(2+) site is built by Asn-199 and Asp-213. Substrate-binding positions include Asn-264 and 321-323; that span reads GIV.

This sequence belongs to the succinate/malate CoA ligase beta subunit family. As to quaternary structure, heterotetramer of two alpha and two beta subunits. The cofactor is Mg(2+).

It catalyses the reaction succinate + ATP + CoA = succinyl-CoA + ADP + phosphate. It carries out the reaction GTP + succinate + CoA = succinyl-CoA + GDP + phosphate. It participates in carbohydrate metabolism; tricarboxylic acid cycle; succinate from succinyl-CoA (ligase route): step 1/1. Its function is as follows. Succinyl-CoA synthetase functions in the citric acid cycle (TCA), coupling the hydrolysis of succinyl-CoA to the synthesis of either ATP or GTP and thus represents the only step of substrate-level phosphorylation in the TCA. The beta subunit provides nucleotide specificity of the enzyme and binds the substrate succinate, while the binding sites for coenzyme A and phosphate are found in the alpha subunit. The polypeptide is Succinate--CoA ligase [ADP-forming] subunit beta (Proteus mirabilis (strain HI4320)).